The following is a 185-amino-acid chain: Ribosome-recycling factor (185 aa).

It belongs to the RRF family.

The protein resides in the cytoplasm. Responsible for the release of ribosomes from messenger RNA at the termination of protein biosynthesis. May increase the efficiency of translation by recycling ribosomes from one round of translation to another. This is Ribosome-recycling factor from Clostridium novyi (strain NT).